Reading from the N-terminus, the 292-residue chain is 4-diphosphocytidyl-2-C-methyl-D-erythritol kinase (292 aa).

Lys-10 is an active-site residue. Residue 94-104 (PVAAGLAGGSS) participates in ATP binding. The active site involves Asp-136.

Belongs to the GHMP kinase family. IspE subfamily.

It catalyses the reaction 4-CDP-2-C-methyl-D-erythritol + ATP = 4-CDP-2-C-methyl-D-erythritol 2-phosphate + ADP + H(+). It functions in the pathway isoprenoid biosynthesis; isopentenyl diphosphate biosynthesis via DXP pathway; isopentenyl diphosphate from 1-deoxy-D-xylulose 5-phosphate: step 3/6. Catalyzes the phosphorylation of the position 2 hydroxy group of 4-diphosphocytidyl-2C-methyl-D-erythritol. The sequence is that of 4-diphosphocytidyl-2-C-methyl-D-erythritol kinase from Brevibacillus brevis (strain 47 / JCM 6285 / NBRC 100599).